The chain runs to 358 residues: MGFDFGCLLKLCSTVLKPGGAPGPINYMEIGLNLIKIAAPYIVQYLGIMERPPRVDVEEFFQQAEVTEGFKPWEAPTHVSGTFRALFIGINYYCTSAELSGCCNDVKQIIATLQRKRIPIDEMSILVDERGFPGANGLPTRDNIVRYMAWLFGGAKPGDVLFMHYSGHGTHTRATSDTEEKFDQCLAPVDFSTKGCILDNDIFRILLSGLLQGVRLTVVFDCCHSGSMLDLPYTFVGSRSLRRSVAGHMQRIRKGNDCAGDVLMISGCADEQTSADVSNAATFGTGASGAGGAATQCLAYTILKVSNLSYQDMLIATRDMLRRKGFTQVPQLSASKPINLQQKFSLMTTFEVDPAVAT.

The important for catalytic activity stretch occupies residues 1–84; that stretch reads MGFDFGCLLK…APTHVSGTFR (84 aa). Active-site residues include H168 and C223.

Belongs to the peptidase C14B family. Post-translationally, in epimastigotes, the unprocessed enzyme appears to be the main form. Auto-processing is dispensable for catalytic activity towards small oligopeptide substrates.

It is found in the cytoplasm. The protein localises to the nucleus. Its activity is regulated as follows. Activated by Ca(2+). Functionally, cysteine protease that cleaves specifically after arginine or lysine residues. In epimastigotes, may play a role in cell cycle G1/S transition. This chain is Metacaspase-3, found in Trypanosoma cruzi (strain CL Brener).